We begin with the raw amino-acid sequence, 326 residues long: Undecaprenyl-phosphate 4-deoxy-4-formamido-L-arabinose transferase (326 aa).

2 helical membrane passes run 234–254 (LLSI…ILLI) and 269–289 (VFTL…GMGL).

It belongs to the glycosyltransferase 2 family.

Its subcellular location is the cell inner membrane. It catalyses the reaction UDP-4-deoxy-4-formamido-beta-L-arabinose + di-trans,octa-cis-undecaprenyl phosphate = 4-deoxy-4-formamido-alpha-L-arabinopyranosyl di-trans,octa-cis-undecaprenyl phosphate + UDP. The protein operates within glycolipid biosynthesis; 4-amino-4-deoxy-alpha-L-arabinose undecaprenyl phosphate biosynthesis; 4-amino-4-deoxy-alpha-L-arabinose undecaprenyl phosphate from UDP-4-deoxy-4-formamido-beta-L-arabinose and undecaprenyl phosphate: step 1/2. Its pathway is bacterial outer membrane biogenesis; lipopolysaccharide biosynthesis. Functionally, catalyzes the transfer of 4-deoxy-4-formamido-L-arabinose from UDP to undecaprenyl phosphate. The modified arabinose is attached to lipid A and is required for resistance to polymyxin and cationic antimicrobial peptides. This is Undecaprenyl-phosphate 4-deoxy-4-formamido-L-arabinose transferase from Aeromonas hydrophila subsp. hydrophila (strain ATCC 7966 / DSM 30187 / BCRC 13018 / CCUG 14551 / JCM 1027 / KCTC 2358 / NCIMB 9240 / NCTC 8049).